The primary structure comprises 344 residues: Small ribosomal subunit protein bS1m (344 aa).

Phosphoserine is present on serine 327.

The protein belongs to the bacterial ribosomal protein bS1 family. Component of the mitochondrial small ribosomal subunit (mt-SSU). Mature yeast 74S mitochondrial ribosomes consist of a small (37S) and a large (54S) subunit. The 37S small subunit contains a 15S ribosomal RNA (15S mt-rRNA) and 34 different proteins. The 54S large subunit contains a 21S rRNA (21S mt-rRNA) and 46 different proteins.

The protein resides in the mitochondrion. Functionally, component of the mitochondrial ribosome (mitoribosome), a dedicated translation machinery responsible for the synthesis of mitochondrial genome-encoded proteins, including at least some of the essential transmembrane subunits of the mitochondrial respiratory chain. The mitoribosomes are attached to the mitochondrial inner membrane and translation products are cotranslationally integrated into the membrane. bS1m functionally interacts with the 5'-UTR of mitochondrial mRNAs. This is Small ribosomal subunit protein bS1m (MRP51) from Saccharomyces cerevisiae (strain ATCC 204508 / S288c) (Baker's yeast).